The sequence spans 859 residues: Protein EFR3 homolog (859 aa).

2 disordered regions span residues 638-657 and 697-724; these read DDPL…TPRT and RDGN…PDGY. The span at 704-722 shows a compositional bias: basic and acidic residues; sequence WQREDGQNFDSTDGRESPD.

Belongs to the EFR3 family.

In Caenorhabditis briggsae, this protein is Protein EFR3 homolog.